A 304-amino-acid polypeptide reads, in one-letter code: Glutaminase (304 aa).

Residues Ser63, Asn114, Glu158, Asn165, Tyr189, Tyr240, and Val258 each coordinate substrate.

Belongs to the glutaminase family. As to quaternary structure, homotetramer.

It carries out the reaction L-glutamine + H2O = L-glutamate + NH4(+). This chain is Glutaminase, found in Shewanella amazonensis (strain ATCC BAA-1098 / SB2B).